The following is a 312-amino-acid chain: DNA-directed RNA polymerase subunit alpha (312 aa).

Residues 1–226 (MIEFEKPIIT…EHLNLFTDLT (226 aa)) form an alpha N-terminal domain (alpha-NTD) region. Positions 243-312 (DEKVLDRTIE…DLGLGLKNDK (70 aa)) are alpha C-terminal domain (alpha-CTD).

It belongs to the RNA polymerase alpha chain family. Homodimer. The RNAP catalytic core consists of 2 alpha, 1 beta, 1 beta' and 1 omega subunit. When a sigma factor is associated with the core the holoenzyme is formed, which can initiate transcription.

The enzyme catalyses RNA(n) + a ribonucleoside 5'-triphosphate = RNA(n+1) + diphosphate. Its function is as follows. DNA-dependent RNA polymerase catalyzes the transcription of DNA into RNA using the four ribonucleoside triphosphates as substrates. The polypeptide is DNA-directed RNA polymerase subunit alpha (Streptococcus mutans serotype c (strain ATCC 700610 / UA159)).